The chain runs to 961 residues: Glycine dehydrogenase (decarboxylating) (961 aa).

Residue K702 is modified to N6-(pyridoxal phosphate)lysine.

The protein belongs to the GcvP family. As to quaternary structure, the glycine cleavage system is composed of four proteins: P, T, L and H. Pyridoxal 5'-phosphate is required as a cofactor.

The enzyme catalyses N(6)-[(R)-lipoyl]-L-lysyl-[glycine-cleavage complex H protein] + glycine + H(+) = N(6)-[(R)-S(8)-aminomethyldihydrolipoyl]-L-lysyl-[glycine-cleavage complex H protein] + CO2. Functionally, the glycine cleavage system catalyzes the degradation of glycine. The P protein binds the alpha-amino group of glycine through its pyridoxal phosphate cofactor; CO(2) is released and the remaining methylamine moiety is then transferred to the lipoamide cofactor of the H protein. In Rhodopseudomonas palustris (strain BisA53), this protein is Glycine dehydrogenase (decarboxylating).